A 110-amino-acid polypeptide reads, in one-letter code: uncharacterized protein (110 aa).

This is an uncharacterized protein from Homo sapiens (Human).